A 303-amino-acid chain; its full sequence is Hemolysin E (303 aa).

A disulfide bridge links cysteine 87 with cysteine 285. The chain crosses the membrane as a helical span at residues 179–199; it reads AGAAAGIVAGPFGLIISYSIA.

The protein belongs to the hemolysin E family. In terms of assembly, monomer and oligomer. In periplasm, it is present as a monomer, while in outer membrane vesicles, it oligomerizes to form a pore structure that is active. The pore is formed by a dodecamer. In periplasm, it forms a disulfide bond, which prevents the oligomerization. In outer membrane vesicles, the redox status prevents formation of the disulfide bond, leading to oligomerization and pore formation.

It is found in the secreted. The protein resides in the periplasm. The protein localises to the host cell membrane. In terms of biological role, toxin, which has some hemolytic activity towards mammalian cells. Acts by forming a pore-like structure upon contact with mammalian cells. This chain is Hemolysin E (hlyE), found in Salmonella typhi.